The following is a 99-amino-acid chain: MSCYTAILKSVGGLALFQVANGAIDLCRHFFMYFCEQKLRPNSFWFVVVRAIASMIMYLVLGIALLYISEQDDKKNTNNDGSNNDKRNESSINSNSSPK.

The N-terminal stretch at 1–22 is a signal peptide; the sequence is MSCYTAILKSVGGLALFQVANG. The Intravirion portion of the chain corresponds to 23-45; the sequence is AIDLCRHFFMYFCEQKLRPNSFW. Residues 46-66 form a helical membrane-spanning segment; sequence FVVVRAIASMIMYLVLGIALL. Over 67–83 the chain is Virion surface; it reads YISEQDDKKNTNNDGSN. Residues 73-89 are compositionally biased toward basic and acidic residues; that stretch reads DKKNTNNDGSNNDKRNE. The interval 73-99 is disordered; that stretch reads DKKNTNNDGSNNDKRNESSINSNSSPK. Asn-88 is a glycosylation site (N-linked (GlcNAc...) asparagine; by host). Residues 90 to 99 show a composition bias toward polar residues; that stretch reads SSINSNSSPK.

It belongs to the oerthopoxvirus OPG135 family.

The protein localises to the virion membrane. Its subcellular location is the host cytoplasm. Functionally, envelope protein. Required for an early step in virion morphogenesis. This is Virion membrane protein OPG135 (OPG135) from Homo sapiens (Human).